A 205-amino-acid chain; its full sequence is Guanylate kinase (205 aa).

Residues 7–185 (GNIFIISAAS…AEEDLRHIVN (179 aa)) enclose the Guanylate kinase-like domain. 14 to 21 (AASGTGKT) contacts ATP.

The protein belongs to the guanylate kinase family.

It localises to the cytoplasm. The catalysed reaction is GMP + ATP = GDP + ADP. Its function is as follows. Essential for recycling GMP and indirectly, cGMP. This Neisseria meningitidis serogroup B (strain ATCC BAA-335 / MC58) protein is Guanylate kinase (gmk).